We begin with the raw amino-acid sequence, 187 residues long: Elongation factor P (187 aa).

Belongs to the elongation factor P family.

Its subcellular location is the cytoplasm. The protein operates within protein biosynthesis; polypeptide chain elongation. Its function is as follows. Involved in peptide bond synthesis. Stimulates efficient translation and peptide-bond synthesis on native or reconstituted 70S ribosomes in vitro. Probably functions indirectly by altering the affinity of the ribosome for aminoacyl-tRNA, thus increasing their reactivity as acceptors for peptidyl transferase. This is Elongation factor P from Syntrophus aciditrophicus (strain SB).